Reading from the N-terminus, the 245-residue chain is Pyridoxine 5'-phosphate synthase (245 aa).

3-amino-2-oxopropyl phosphate contacts are provided by Asn8 and Arg19. The active-site Proton acceptor is the His44. 2 residues coordinate 1-deoxy-D-xylulose 5-phosphate: Arg46 and His51. The active-site Proton acceptor is Glu76. Thr106 serves as a coordination point for 1-deoxy-D-xylulose 5-phosphate. His198 (proton donor) is an active-site residue. 3-amino-2-oxopropyl phosphate-binding positions include Asp199 and 221 to 222 (GH).

This sequence belongs to the PNP synthase family. As to quaternary structure, homooctamer; tetramer of dimers.

The protein resides in the cytoplasm. It carries out the reaction 3-amino-2-oxopropyl phosphate + 1-deoxy-D-xylulose 5-phosphate = pyridoxine 5'-phosphate + phosphate + 2 H2O + H(+). Its pathway is cofactor biosynthesis; pyridoxine 5'-phosphate biosynthesis; pyridoxine 5'-phosphate from D-erythrose 4-phosphate: step 5/5. Its function is as follows. Catalyzes the complicated ring closure reaction between the two acyclic compounds 1-deoxy-D-xylulose-5-phosphate (DXP) and 3-amino-2-oxopropyl phosphate (1-amino-acetone-3-phosphate or AAP) to form pyridoxine 5'-phosphate (PNP) and inorganic phosphate. The chain is Pyridoxine 5'-phosphate synthase from Brucella anthropi (strain ATCC 49188 / DSM 6882 / CCUG 24695 / JCM 21032 / LMG 3331 / NBRC 15819 / NCTC 12168 / Alc 37) (Ochrobactrum anthropi).